A 220-amino-acid chain; its full sequence is ATP-dependent Clp protease proteolytic subunit (220 aa).

The active-site Nucleophile is S125. The active site involves H150.

The protein belongs to the peptidase S14 family. Fourteen ClpP subunits assemble into 2 heptameric rings which stack back to back to give a disk-like structure with a central cavity, resembling the structure of eukaryotic proteasomes.

The protein localises to the cytoplasm. The catalysed reaction is Hydrolysis of proteins to small peptides in the presence of ATP and magnesium. alpha-casein is the usual test substrate. In the absence of ATP, only oligopeptides shorter than five residues are hydrolyzed (such as succinyl-Leu-Tyr-|-NHMec, and Leu-Tyr-Leu-|-Tyr-Trp, in which cleavage of the -Tyr-|-Leu- and -Tyr-|-Trp bonds also occurs).. Functionally, cleaves peptides in various proteins in a process that requires ATP hydrolysis. Has a chymotrypsin-like activity. Plays a major role in the degradation of misfolded proteins. The polypeptide is ATP-dependent Clp protease proteolytic subunit (Bacteroides fragilis (strain YCH46)).